Consider the following 168-residue polypeptide: Phosphopantetheine adenylyltransferase (168 aa).

S9 is a substrate binding site. ATP is bound by residues 9–10 (SF) and H17. Substrate is bound by residues K41, L73, and R87. ATP-binding positions include 88-90 (GLR), E98, and 123-129 (YAFLSSS).

Belongs to the bacterial CoaD family. Homohexamer. The cofactor is Mg(2+).

The protein resides in the cytoplasm. The catalysed reaction is (R)-4'-phosphopantetheine + ATP + H(+) = 3'-dephospho-CoA + diphosphate. The protein operates within cofactor biosynthesis; coenzyme A biosynthesis; CoA from (R)-pantothenate: step 4/5. Functionally, reversibly transfers an adenylyl group from ATP to 4'-phosphopantetheine, yielding dephospho-CoA (dPCoA) and pyrophosphate. In Heliobacterium modesticaldum (strain ATCC 51547 / Ice1), this protein is Phosphopantetheine adenylyltransferase.